The chain runs to 158 residues: Na(+)/H(+) antiporter subunit E (158 aa).

A run of 2 helical transmembrane segments spans residues 22–41 and 54–76; these read YTAV…LFVL and IWAI…IDVI.

Belongs to the CPA3 antiporters (TC 2.A.63) subunit E family. Forms a heterooligomeric complex that consists of seven subunits: MrpA, MrpB, MrpC, MrpD, MrpE, MrpF and MrpG.

The protein resides in the cell membrane. In terms of biological role, mnh complex is a Na(+)Li(+)/H(+) antiporter involved in Na(+) and/or Li(+) excretion and Na(+) resistance. Na(+)/H(+) antiport consumes a transmembrane electrical potential, and is thus inferred to be electrogenic. Does not transport K(+), Ca(2+) or Mg(2+). Functionally, mrp complex is a Na(+)/H(+) antiporter involved in Na(+) excretion and Na(+) resistance. The polypeptide is Na(+)/H(+) antiporter subunit E (mrpE) (Alkalihalophilus pseudofirmus (strain ATCC BAA-2126 / JCM 17055 / OF4) (Bacillus pseudofirmus)).